The primary structure comprises 84 residues: Anaphase-promoting complex subunit 11 (84 aa).

Zn(2+) contacts are provided by Cys23, Cys26, Cys34, Cys37, Cys44, Cys51, His53, His56, His58, Cys59, Cys73, and Cys76. Residues 34-77 (CPDCKVPGDDCPLVWGQCSHCFHMHCILKWLHAQQVQQHCPMCR) form an RING-type zinc finger.

The protein belongs to the RING-box family. The mammalian APC/C is composed at least of 14 distinct subunits ANAPC1, ANAPC2, CDC27/APC3, ANAPC4, ANAPC5, CDC16/APC6, ANAPC7, CDC23/APC8, ANAPC10, ANAPC11, CDC26/APC12, ANAPC13, ANAPC15 and ANAPC16 that assemble into a complex of at least 19 chains with a combined molecular mass of around 1.2 MDa; APC/C interacts with FZR1 and FBXO5. Interacts with the cullin domain of ANAPC2. Interacts with UBE2D2. Post-translationally, auto-ubiquitinated. In terms of tissue distribution, expressed at high levels in skeletal muscle and heart; in moderate levels in brain, kidney, and liver; and at low levels in colon, thymus, spleen, small intestine, placenta, lung and peripheral blood leukocyte.

The protein resides in the cytoplasm. It localises to the nucleus. It functions in the pathway protein modification; protein ubiquitination. Together with the cullin protein ANAPC2, constitutes the catalytic component of the anaphase promoting complex/cyclosome (APC/C), a cell cycle-regulated E3 ubiquitin ligase that controls progression through mitosis and the G1 phase of the cell cycle. The APC/C complex acts by mediating ubiquitination and subsequent degradation of target proteins: it mainly mediates the formation of 'Lys-11'-linked polyubiquitin chains and, to a lower extent, the formation of 'Lys-48'- and 'Lys-63'-linked polyubiquitin chains. The APC/C complex catalyzes assembly of branched 'Lys-11'-/'Lys-48'-linked branched ubiquitin chains on target proteins. May recruit the E2 ubiquitin-conjugating enzymes to the complex. In Homo sapiens (Human), this protein is Anaphase-promoting complex subunit 11 (ANAPC11).